The primary structure comprises 177 residues: Disulfide bond formation protein B (177 aa).

Topologically, residues 1–14 (MLIFFKNLSMKRST) are cytoplasmic. The helical transmembrane segment at 15–31 (WILLFISALVLESTALY) threads the bilayer. Residues 32–49 (FQHGMGLNPCVMCIYERV) are Periplasmic-facing. Cys-41 and Cys-44 are disulfide-bonded. A helical membrane pass occupies residues 50–65 (AILGILFSGLIGCIAP). Topologically, residues 66–72 (KWLVLRI) are cytoplasmic. A helical membrane pass occupies residues 73 to 90 (LALLIGLGSAVKGLLLAI). Topologically, residues 91 to 145 (KHLDYQINVYPWNQCAMVPDFPQTLPLDKWFPNIFMPSGSCSDITWSFLGFSMVQ) are periplasmic. A disulfide bridge links Cys-105 with Cys-131. The helical transmembrane segment at 146-164 (WIIVIFACYFLFFIILSIS) threads the bilayer. Residues 165–177 (QFKKVRKNRMLFR) lie on the Cytoplasmic side of the membrane.

This sequence belongs to the DsbB family.

It is found in the cell inner membrane. In terms of biological role, required for disulfide bond formation in some periplasmic proteins. Acts by oxidizing the DsbA protein. This Histophilus somni (strain 129Pt) (Haemophilus somnus) protein is Disulfide bond formation protein B.